Here is a 447-residue protein sequence, read N- to C-terminus: MALISRPRAPLWLGRLSRRLCGRHQACMGTMARPRRFTVELPDCSLTHFVLGDATDHRDARLAELLGPPGRSYALCVPLAPGEGCGPRVQAARVHHRLLQQLRRGPLQRCQLSKLLGYGPGDQAGEAQHGFLLRDPCDHPDTRRDLLQLLGSCQEAARPQLAEFQADSQGLLWQRLWELQGDRQVQVDCACVLPAQEPHLHPLLPDLLNSAVFQDRDAARAVLEECTSFIPEARAVLDLVDQCPKEVQKGKFQVIAIEGLDATGKTTLTQSVSESLKAVLLQSPPPCISQWRKIFDDEPTIIRRAFYSLGNYLVASEIAKESTNFPVIVDRYWHSTATYAIATEVSGGLQYLPPAHHPVYQWPGDLLKPDLVLLLTVNSEERVRRLQGRGQEKTKEEAELEANNVFRQKVEMTYQRMENPSCHLVDASPSRETVLQKVLELIQSSGR.

Residues Met1 to Tyr73 constitute a mitochondrion transit peptide. Gly259–Thr266 serves as a coordination point for ATP. The stretch at Glu380–Met412 forms a coiled coil.

Belongs to the thymidylate kinase family. Strongly expressed in the brain.

The protein localises to the mitochondrion. The catalysed reaction is CMP + ATP = CDP + ADP. It catalyses the reaction dCMP + ATP = dCDP + ADP. The enzyme catalyses a 2'-deoxyribonucleoside 5'-diphosphate + ATP = a 2'-deoxyribonucleoside 5'-triphosphate + ADP. It carries out the reaction a ribonucleoside 5'-diphosphate + ATP = a ribonucleoside 5'-triphosphate + ADP. Its function is as follows. Mitochondrial nucleotide monophosphate kinase needed for salvage dNTP synthesis that mediates immunomodulatory and antiviral activities through IFN-dependent and IFN-independent pathways. Restricts the replication of multiple viruses including flaviviruses or coronaviruses. Together with viperin/RSAD2 and ddhCTP, suppresses the replication of several coronaviruses through inhibition of the viral RNA-dependent RNA polymerase activities. Concerning flaviviruses, restricts RNA translation when localized to the mitochondria independently of its kinase activity. Is able to phosphorylate dUMP, dCMP, CMP, UMP and monophosphates of the pyrimidine nucleoside analogs ddC, dFdC, araC, BVDU and FdUrd with ATP as phosphate donor. Efficacy is highest for dUMP followed by dCMP while CMP and UMP are poor substrates. Controls therefore mitochondrial DNA synthesis by supplying required deoxyribonucleotides. CMPK2-dependent mitochondrial DNA synthesis is necessary for the production of oxidized mitochondrial DNA fragments after exposure to NLRP3 activators. In turn, cytosolic oxidized mtDNA associates with the NLRP3 inflammasome complex and is required for its activation. The protein is UMP-CMP kinase 2, mitochondrial (Cmpk2) of Mus musculus (Mouse).